Here is a 367-residue protein sequence, read N- to C-terminus: Putative F-box protein At4g10190 (367 aa).

The F-box domain maps to 3 to 53; it reads KRNIVDLPEDLVMEILARVPTVTLVRLQSTSKRWNVLIEDKRFAEQHFTNA.

The protein is Putative F-box protein At4g10190 of Arabidopsis thaliana (Mouse-ear cress).